The chain runs to 157 residues: Small ribosomal subunit protein uS7 (157 aa).

The protein belongs to the universal ribosomal protein uS7 family. In terms of assembly, part of the 30S ribosomal subunit. Contacts proteins S9 and S11.

Its function is as follows. One of the primary rRNA binding proteins, it binds directly to 16S rRNA where it nucleates assembly of the head domain of the 30S subunit. Is located at the subunit interface close to the decoding center, probably blocks exit of the E-site tRNA. The chain is Small ribosomal subunit protein uS7 from Caulobacter sp. (strain K31).